Here is a 154-residue protein sequence, read N- to C-terminus: 3-hydroxyacyl-[acyl-carrier-protein] dehydratase FabZ (154 aa).

Residue histidine 58 is part of the active site.

This sequence belongs to the thioester dehydratase family. FabZ subfamily.

The protein resides in the cytoplasm. The catalysed reaction is a (3R)-hydroxyacyl-[ACP] = a (2E)-enoyl-[ACP] + H2O. Involved in unsaturated fatty acids biosynthesis. Catalyzes the dehydration of short chain beta-hydroxyacyl-ACPs and long chain saturated and unsaturated beta-hydroxyacyl-ACPs. This chain is 3-hydroxyacyl-[acyl-carrier-protein] dehydratase FabZ, found in Protochlamydia amoebophila (strain UWE25).